The following is a 424-amino-acid chain: MASKEVLEDTVEERVISEEYKIWKKNTPFLYDLVMTHALEWPSLTVQWLPDVSRPEGKDYALHWLVLGTHTSDEQNHLVVARVQIPNDDQFDTSQYDSEKGEFGGFGSVTGKIETEIKINHEGEVNRARYMPQNPYIIATKTPSADVLVFDYTKHPSKPDPSGECNPDLRLRGHQKEGYGLSWNSNLKGHLLSASDDHTVCLWDISAGPKEGKIVDAKAIFTGHSAVVEDVAWHLLHESLFGSVADDQKLMIWDTRSNTTSKPSHSVDAHTAEVNCLSFNPYSEFILATGSADKTVALWDLRNLKLKLHSFESHKDEIFQVHWSPHNETILASSGTDRRLNVWDLSKIGEEQSAEDAEDGPPELLFIHGGHTAKISDFSWNPNEPWVICSVSEDNIMQIWQMAENIYNDEEPDIAAAELEGQGT.

WD repeat units lie at residues 47 to 121 (QWLP…KINH), 127 to 172 (RARY…LRLR), 180 to 216 (GLSWNSNLKGHLLSASDDHTVCLWDISAGPKEGKIVD), 227 to 268 (VVED…HSVD), 274 to 311 (VNCLSFNPYSEFILATGSADKTVALWDLRNLKLKLHSF), 317 to 368 (EIFQ…LFIH), and 375 to 402 (ISDFSWNPNEPWVICSVSEDNIMQIWQM). Residues 359-404 (DGPPELLFIHGGHTAKISDFSWNPNEPWVICSVSEDNIMQIWQMAE) form an interaction with HAT1 region.

The protein belongs to the WD repeat RBAP46/RBAP48/MSI1 family. As to quaternary structure, binds directly to helix 1 of the histone fold of histone H4, a region that is not accessible when H4 is in chromatin. Also interacts with histone H2B and HAT1.

Its subcellular location is the nucleus. Functionally, core histone-binding subunit that may target chromatin remodeling factors, histone acetyltransferases and histone deacetylases to their histone substrates in a manner that is regulated by nucleosomal DNA. Component of several complexes which regulate chromatin metabolism. In Gallus gallus (Chicken), this protein is Histone-binding protein RBBP7 (RBBP7).